The following is a 530-amino-acid chain: Autoinducer-2 kinase (530 aa).

This sequence belongs to the FGGY kinase family.

It is found in the cytoplasm. The catalysed reaction is (S)-4,5-dihydroxypentane-2,3-dione + ATP = (2S)-2-hydroxy-3,4-dioxopentyl phosphate + ADP + H(+). In terms of biological role, catalyzes the phosphorylation of autoinducer-2 (AI-2) to phospho-AI-2, which subsequently inactivates the transcriptional regulator LsrR and leads to the transcription of the lsr operon. Phosphorylates the ring-open form of (S)-4,5-dihydroxypentane-2,3-dione (DPD), which is the precursor to all AI-2 signaling molecules, at the C5 position. This chain is Autoinducer-2 kinase, found in Salmonella choleraesuis (strain SC-B67).